Consider the following 168-residue polypeptide: Zinc-finger homeodomain protein 14 (168 aa).

Residues 7 to 51 (YRECMRNHAAKLGSYAIDGCREYSQPSTGDLCVACGCHRSYHRRI) form a ZF-HD dimerization-type; degenerate zinc finger. Residues 76–103 (ARLKWKTAEERNEEEEDDTEETSTEEKM) are a coiled coil. Residues 82–112 (TAEERNEEEEDDTEETSTEEKMTVQRRRKSK) form a disordered region. Positions 86 to 98 (RNEEEEDDTEETS) are enriched in acidic residues. The segment at residues 106 to 168 (QRRRKSKFTA…WVNNNKKFYH (63 aa)) is a DNA-binding region (homeobox).

In terms of assembly, homo- and heterodimer with other ZFHD proteins. Interacts with ZHD11. In terms of tissue distribution, mostly expressed in flowers and stems.

It is found in the nucleus. Functionally, putative transcription factor. The sequence is that of Zinc-finger homeodomain protein 14 (ZHD14) from Arabidopsis thaliana (Mouse-ear cress).